Reading from the N-terminus, the 485-residue chain is MSASDFSSAVVVLAAGAGTRMKSDLQKTLHSIGGRSLISHSLHAAAGLNPEHIVAVIGHGRDQVGPAVAQVAEELDREVLIAIQEEQNGTGHAVQCAMDQLEGFEGTIIVTNGDVPLLTDHTLSALLDAHVEVPTAVTVLTMRLDDPTGYGRIVRNEEGEVTAIVEQKDASAEVQAIDEVNSGVFAFDAAILRSALAELKSDNAQGELYLTDVLGIARGEGHPVRAHTAADARELAGVNDRVQLAEAGAELNRRTVIAAMRGGATIVDPATTWIDVEVSIGRDVIIHPGTQLKGETVIGDRVEVGPDTTLTNMTIGDGASVIRTHGFDSTIGENATVGPFTYIRPGTTLGPEGKLGGFVETKKATIGRGSKVPHLTYVGDATIGEESNIGASSVFVNYDGENKHHTTIGSHVRTGSDTMFIAPVTVGDGAYSGAGTVIKDDVPPGALAVSGGRQRNIEGWVQKKRPGTAAAQAAEAAQNVHNQEG.

Residues 1–241 (MSASDFSSAV…ARELAGVNDR (241 aa)) form a pyrophosphorylase region. Residues 13-16 (LAAG), Lys27, Gln84, and 89-90 (GT) contribute to the UDP-N-acetyl-alpha-D-glucosamine site. Residue Asp114 participates in Mg(2+) binding. The UDP-N-acetyl-alpha-D-glucosamine site is built by Gly151, Glu166, Asn181, and Asn239. Asn239 contacts Mg(2+). Residues 242–262 (VQLAEAGAELNRRTVIAAMRG) form a linker region. An N-acetyltransferase region spans residues 263-485 (GATIVDPATT…AAQNVHNQEG (223 aa)). Arg344 and Lys362 together coordinate UDP-N-acetyl-alpha-D-glucosamine. Residue His374 is the Proton acceptor of the active site. The UDP-N-acetyl-alpha-D-glucosamine site is built by Tyr377 and Asn388. Residues Ala391, 397-398 (NY), Ser416, and Ala434 contribute to the acetyl-CoA site. The interval 465 to 485 (RPGTAAAQAAEAAQNVHNQEG) is disordered. Over residues 469–478 (AAAQAAEAAQ) the composition is skewed to low complexity.

In the N-terminal section; belongs to the N-acetylglucosamine-1-phosphate uridyltransferase family. This sequence in the C-terminal section; belongs to the transferase hexapeptide repeat family. In terms of assembly, homotrimer. It depends on Mg(2+) as a cofactor.

It localises to the cytoplasm. It catalyses the reaction alpha-D-glucosamine 1-phosphate + acetyl-CoA = N-acetyl-alpha-D-glucosamine 1-phosphate + CoA + H(+). The catalysed reaction is N-acetyl-alpha-D-glucosamine 1-phosphate + UTP + H(+) = UDP-N-acetyl-alpha-D-glucosamine + diphosphate. The protein operates within nucleotide-sugar biosynthesis; UDP-N-acetyl-alpha-D-glucosamine biosynthesis; N-acetyl-alpha-D-glucosamine 1-phosphate from alpha-D-glucosamine 6-phosphate (route II): step 2/2. It functions in the pathway nucleotide-sugar biosynthesis; UDP-N-acetyl-alpha-D-glucosamine biosynthesis; UDP-N-acetyl-alpha-D-glucosamine from N-acetyl-alpha-D-glucosamine 1-phosphate: step 1/1. Its pathway is bacterial outer membrane biogenesis; LPS lipid A biosynthesis. In terms of biological role, catalyzes the last two sequential reactions in the de novo biosynthetic pathway for UDP-N-acetylglucosamine (UDP-GlcNAc). The C-terminal domain catalyzes the transfer of acetyl group from acetyl coenzyme A to glucosamine-1-phosphate (GlcN-1-P) to produce N-acetylglucosamine-1-phosphate (GlcNAc-1-P), which is converted into UDP-GlcNAc by the transfer of uridine 5-monophosphate (from uridine 5-triphosphate), a reaction catalyzed by the N-terminal domain. This is Bifunctional protein GlmU from Corynebacterium glutamicum (strain ATCC 13032 / DSM 20300 / JCM 1318 / BCRC 11384 / CCUG 27702 / LMG 3730 / NBRC 12168 / NCIMB 10025 / NRRL B-2784 / 534).